The primary structure comprises 193 residues: Xanthine phosphoribosyltransferase (193 aa).

Positions 20 and 27 each coordinate xanthine. A 5-phospho-alpha-D-ribose 1-diphosphate-binding site is contributed by 128 to 132; that stretch reads ANGQA. Lysine 156 contributes to the xanthine binding site.

It belongs to the purine/pyrimidine phosphoribosyltransferase family. Xpt subfamily. As to quaternary structure, homodimer.

The protein localises to the cytoplasm. It catalyses the reaction XMP + diphosphate = xanthine + 5-phospho-alpha-D-ribose 1-diphosphate. It functions in the pathway purine metabolism; XMP biosynthesis via salvage pathway; XMP from xanthine: step 1/1. Converts the preformed base xanthine, a product of nucleic acid breakdown, to xanthosine 5'-monophosphate (XMP), so it can be reused for RNA or DNA synthesis. In Streptococcus pyogenes serotype M49 (strain NZ131), this protein is Xanthine phosphoribosyltransferase.